The following is a 193-amino-acid chain: Chlorate reductase assembly chaperone protein (193 aa).

The protein belongs to the type II DMSO reductase enzyme chaperone family.

It is found in the cytoplasm. In terms of biological role, may function as a system-specific chaperone protein essential for the assembly of an active chlorate reductase ClrABC. In Ideonella dechloratans, this protein is Chlorate reductase assembly chaperone protein (clrD).